The primary structure comprises 203 residues: MACGATLKRTLDFDPLLSPASPKRRRCAPLSAPTSAAASPLSAAAATAASFSAAAASPQKYLRMEPSPFGDVSSRLTTEQILYNIKQEYKRMQKRRHLETSFQQTDPCCTSDAQPHAFLLSGPASPGTSSAASSPLKKEQPLFTLRQVGMICERLLKEREEKVREEYEEILNTKLAEQYDAFVKFTHDQIMRRYGEQPASYVS.

Phosphoserine is present on residues S18 and S21. The Nuclear localization signal motif lies at 22–27; the sequence is PKRRRC. At S57 the chain carries Phosphoserine. The SYVS motif signature appears at 200–203; the sequence is SYVS.

The protein belongs to the akirin family. In terms of assembly, homodimer. Interacts with IPO9; the interaction is direct. Associates (via SYVS motif) with 20S and 26S proteasomes. Interacts with SMARCD1; promoting SWI/SNF complex recruitment. Interacts with NFKBIZ. Interacts with YWHAB. Post-translationally, polyubiquitinated. Polyubiquitination is dependent of UBR5 that extends pre-ubiquitinated AKIRIN2. Widely expressed with the highest expression in peripheral blood leukocytes.

Its subcellular location is the nucleus. It is found in the cytoplasm. The protein resides in the membrane. Its function is as follows. Molecular adapter that acts as a bridge between a variety of multiprotein complexes, and which is involved in embryonic development, immunity, myogenesis and brain development. Plays a key role in nuclear protein degradation by promoting import of proteasomes into the nucleus: directly binds to fully assembled 20S proteasomes at one end and to nuclear import receptor IPO9 at the other end, bridging them together and mediating the import of pre-assembled proteasome complexes through the nuclear pore. Involved in innate immunity by regulating the production of interleukin-6 (IL6) downstream of Toll-like receptor (TLR): acts by bridging the NF-kappa-B inhibitor NFKBIZ and the SWI/SNF complex, leading to promote induction of IL6. Also involved in adaptive immunity by promoting B-cell activation. Involved in brain development: required for the survival and proliferation of cerebral cortical progenitor cells. Involved in myogenesis: required for skeletal muscle formation and skeletal development, possibly by regulating expression of muscle differentiation factors. Also plays a role in facilitating interdigital tissue regression during limb development. The sequence is that of Akirin-2 from Homo sapiens (Human).